The following is a 435-amino-acid chain: Type A flavoprotein fprA (435 aa).

The interval 48–228 (ANGTTYNAYA…PFRSFVAQVL (181 aa)) is zinc metallo-hydrolase. Positions 98, 100, 102, 167, 186, and 243 each coordinate Fe cation. One can recognise a Flavodoxin-like domain in the interval 276–415 (LLIFYVSAYR…EGRAFGRRLA (140 aa)).

It in the N-terminal section; belongs to the zinc metallo-hydrolase group 3 family. As to quaternary structure, homodimer. FMN serves as cofactor. It depends on Fe cation as a cofactor.

Functionally, low-potential electron donor to a number of redox enzymes. The protein is Type A flavoprotein fprA (fprA) of Rhodobacter capsulatus (Rhodopseudomonas capsulata).